Consider the following 272-residue polypeptide: HMP-PP phosphatase (272 aa).

The active-site Nucleophile is aspartate 8. Residues aspartate 8, aspartate 10, and aspartate 212 each coordinate Mg(2+).

It belongs to the HAD-like hydrolase superfamily. Cof family. It depends on Mg(2+) as a cofactor.

The catalysed reaction is 4-amino-2-methyl-5-(diphosphooxymethyl)pyrimidine + H2O = 4-amino-2-methyl-5-(phosphooxymethyl)pyrimidine + phosphate + H(+). Its function is as follows. Catalyzes the hydrolysis of 4-amino-2-methyl-5-hydroxymethylpyrimidine pyrophosphate (HMP-PP) to 4-amino-2-methyl-5-hydroxymethylpyrimidine phosphate (HMP-P). The polypeptide is HMP-PP phosphatase (Escherichia coli (strain 55989 / EAEC)).